The following is a 393-amino-acid chain: S-adenosylmethionine synthase 4 (393 aa).

Glu9 serves as a coordination point for Mg(2+). ATP is bound at residue His15. Glu43 serves as a coordination point for K(+). Glu56 and Gln99 together coordinate L-methionine. Residues 167-169, 235-238, Asp246, 252-253, Ala269, Lys273, and Lys277 contribute to the ATP site; these read DGK, SGRF, and RK. An L-methionine-binding site is contributed by Asp246. Lys277 is an L-methionine binding site.

Belongs to the AdoMet synthase family. As to quaternary structure, homotetramer. Requires Mn(2+) as cofactor. Mg(2+) serves as cofactor. It depends on Co(2+) as a cofactor. The cofactor is K(+).

It localises to the cytoplasm. It carries out the reaction L-methionine + ATP + H2O = S-adenosyl-L-methionine + phosphate + diphosphate. It functions in the pathway amino-acid biosynthesis; S-adenosyl-L-methionine biosynthesis; S-adenosyl-L-methionine from L-methionine: step 1/1. In terms of biological role, catalyzes the formation of S-adenosylmethionine from methionine and ATP. The reaction comprises two steps that are both catalyzed by the same enzyme: formation of S-adenosylmethionine (AdoMet) and triphosphate, and subsequent hydrolysis of the triphosphate. In Vitis vinifera (Grape), this protein is S-adenosylmethionine synthase 4 (METK4).